We begin with the raw amino-acid sequence, 351 residues long: Probable protein phosphatase 2C 8 (351 aa).

Residues 1-63 (MLEKESDLTA…REAEEDKPSF (63 aa)) form a disordered region. Basic and acidic residues predominate over residues 54-63 (REAEEDKPSF). The PPM-type phosphatase domain occupies 74–348 (EADVAEDKGA…DNCTAIVIVF (275 aa)). Residues Asp114, Gly115, Asp295, and Asp339 each contribute to the Mn(2+) site.

The protein belongs to the PP2C family. Requires Mg(2+) as cofactor. Mn(2+) serves as cofactor.

It carries out the reaction O-phospho-L-seryl-[protein] + H2O = L-seryl-[protein] + phosphate. It catalyses the reaction O-phospho-L-threonyl-[protein] + H2O = L-threonyl-[protein] + phosphate. This Arabidopsis thaliana (Mouse-ear cress) protein is Probable protein phosphatase 2C 8.